We begin with the raw amino-acid sequence, 348 residues long: ECA polysaccharide chain length modulation protein (348 aa).

Residues 1 to 30 (MTQPMPGKPAEDAENELDIRGLFRTLWAGK) lie on the Cytoplasmic side of the membrane. The helical transmembrane segment at 31–51 (LWIIGMGLAFALIALAYTFFA) threads the bilayer. Topologically, residues 52 to 322 (RQEWSSTAIT…EPVKRDSPRR (271 aa)) are periplasmic. A helical transmembrane segment spans residues 323–343 (AFLMIMWGIVGGLIGAGVALT). At 344 to 348 (RRCSK) the chain is on the cytoplasmic side.

It belongs to the WzzB/Cld/Rol family. In terms of assembly, homooctamer. Probably part of a complex composed of WzxE, WzyE and WzzE.

It is found in the cell inner membrane. The protein operates within bacterial outer membrane biogenesis; enterobacterial common antigen biosynthesis. Functionally, modulates the polysaccharide chain length of enterobacterial common antigen (ECA). The sequence is that of ECA polysaccharide chain length modulation protein from Escherichia coli O157:H7.